We begin with the raw amino-acid sequence, 244 residues long: Na(+)-translocating NADH-quinone reductase subunit E (244 aa).

The next 6 helical transmembrane spans lie at 11–31 (LLGIFLQATFIQNILLSTFLG), 50–70 (MSVALVLTITGSINWLVHYFI), 90–110 (FLELIMFIVVIAAFTQILEVL), 123–143 (GIFLPLIAVNCAILGGVLFGI), 153–173 (VVFSLGSGCGWWLAIVLFATI), and 191–211 (ISFITTGLMAMAFMGLTGIDI). Residues 222–236 (VTNIATDSPQPNTHS) are compositionally biased toward polar residues. The tract at residues 222–244 (VTNIATDSPQPNTHSSSEEPKAS) is disordered.

The protein belongs to the NqrDE/RnfAE family. As to quaternary structure, composed of six subunits; NqrA, NqrB, NqrC, NqrD, NqrE and NqrF.

The protein resides in the cell inner membrane. The enzyme catalyses a ubiquinone + n Na(+)(in) + NADH + H(+) = a ubiquinol + n Na(+)(out) + NAD(+). Functionally, NQR complex catalyzes the reduction of ubiquinone-1 to ubiquinol by two successive reactions, coupled with the transport of Na(+) ions from the cytoplasm to the periplasm. NqrA to NqrE are probably involved in the second step, the conversion of ubisemiquinone to ubiquinol. The protein is Na(+)-translocating NADH-quinone reductase subunit E of Chlamydia trachomatis serovar A (strain ATCC VR-571B / DSM 19440 / HAR-13).